The primary structure comprises 396 residues: Multidrug efflux protein YfmO (396 aa).

12 helical membrane-spanning segments follow: residues Val20–Ile40, Ser56–Ile76, Ile80–Gly100, Gly114–Val134, Ala142–Gly162, Ala171–Leu191, Gly214–Ala234, Tyr249–Val269, Ser278–Asp298, Thr301–Met321, Ala339–Ser359, and Ala364–Met384.

This sequence belongs to the major facilitator superfamily.

The protein localises to the cell membrane. Acts to efflux copper or a copper complex. It is possible that YfmO could contribute to copper resistance. The protein is Multidrug efflux protein YfmO (yfmO) of Bacillus subtilis (strain 168).